The chain runs to 367 residues: Ataxin-7-like protein 3 (367 aa).

The SGF11-type zinc-finger motif lies at 84-105 (CVCPNCSRSIAASRFAPHLEKC). Low complexity predominate over residues 116–125 (ANRRIASSNN). Residues 116–184 (ANRRIASSNN…GELSGSVNPD (69 aa)) form a disordered region. Residues 132–141 (DQEDNDDIND) show a composition bias toward acidic residues. Positions 199-266 (LGPEELRSIL…TMLENEAYEP (68 aa)) constitute an SCA7 domain. Over residues 280–299 (ASSDISPSDSASSKASTNNS) the composition is skewed to low complexity. The segment at 280–367 (ASSDISPSDS…PAPSIYDDLN (88 aa)) is disordered. Positions 318-329 (GERDKAQERDRI) are enriched in basic and acidic residues. Over residues 330–346 (AGSGSSGSSSQNALGLS) the composition is skewed to low complexity.

This sequence belongs to the SGF11 family. Component of some SAGA transcription coactivator-HAT complexes. Within the SAGA complex, participates in a subcomplex of SAGA called the DUB module (deubiquitination module).

It localises to the nucleus. Component of the transcription regulatory histone acetylation (HAT) complex SAGA, a multiprotein complex that activates transcription by remodeling chromatin and mediating histone acetylation and deubiquitination. Within the SAGA complex, participates in a subcomplex that specifically deubiquitinates histone H2B. The SAGA complex is recruited to specific gene promoters by activators, where it is required for transcription. This is Ataxin-7-like protein 3 (atxn7l3) from Danio rerio (Zebrafish).